The primary structure comprises 370 residues: Alpha-ketoglutarate-dependent xanthine dioxygenase xanA (370 aa).

His-107 contacts substrate. Positions 149 and 151 each coordinate Fe cation. 2-oxoglutarate is bound by residues Thr-195 and Trp-325. His-340 serves as a coordination point for Fe cation. Arg-352 serves as a coordination point for 2-oxoglutarate.

Belongs to the TfdA dioxygenase family. Requires Fe(2+) as cofactor. Glycosylated. Is subject to both N- and O-linked glycosylation. In terms of processing, phosphorylated.

It is found in the cytoplasm. It localises to the cytosol. It carries out the reaction xanthine + 2-oxoglutarate + O2 = urate + succinate + CO2. Cu(2+) and Zn(2+) completely inhibit the xanthine dioxygenase activity, whereas Co(2+), Mn(2+), and Ni(2+) partially inhibit the activity. The inactive metal ions are presumed to compete for the Fe(2+)-binding site. N-oxalylglycine (NOG), a known inhibitor of several Fe(2+)/alpha-ketoglutarate-dependent dioxygenase family members, competes with alpha-ketoglutarate and provides a Ki of 0.12 uM for inhibition. 6,8-dihydroxypurine acts as a slow-binding competitive inhibitor. The thiol-specific inhibitors 5,5'-dithiobis(2-nitrobenzoic acid) (DTNB) and iodoacetamide, inhibit also the catalytic activity. In terms of biological role, alpha-ketoglutarate-dependent xanthine dioxygenase is a non-heme mononuclear Fe(2+) enzyme that decarboxylates alpha-ketoglutarate to succinate and CO(2) while hydroxylating xanthine to generate uric acid. Allows xanthine utilization as a nitrogen source. Whereas xanA is highly specific for xanthine, alpha-ketoadipic acid can replace alpha-ketoglutarate as a cosubstrate. Exhibits ferroxidase activity in the absence of substrates. In Emericella nidulans (Aspergillus nidulans), this protein is Alpha-ketoglutarate-dependent xanthine dioxygenase xanA.